The primary structure comprises 418 residues: cAMP-dependent protein kinase type II-beta regulatory subunit (418 aa).

Residues 2–153 (SIEIPAGLTE…RLQEACKDIL (152 aa)) are dimerization and phosphorylation. Positions 48–57 (TARFGHEGRT) are enriched in basic and acidic residues. The tract at residues 48–96 (TARFGHEGRTWGDLGAAAGGGTPSKGVNFAEEPMQSDSEDGEEEEAAPA) is disordered. Thr69 carries the phosphothreonine modification. Phosphoserine occurs at positions 83, 85, and 114. Acidic residues predominate over residues 84 to 94 (DSEDGEEEEAA). 3',5'-cyclic AMP-binding positions include 154 to 275 (LFKN…ESLP), Glu223, Arg232, 276 to 418 (FLKS…EPTA), Glu352, and Arg361.

It belongs to the cAMP-dependent kinase regulatory chain family. In terms of assembly, the inactive form of the enzyme is composed of two regulatory chains and two catalytic chains. Activation by cAMP produces two active catalytic monomers and a regulatory dimer that binds four cAMP molecules. Interacts with PRKACA and PRKACB. Interacts with the phosphorylated form of PJA2. Forms a complex composed of PRKAR2B, GSK3B and GSKIP through GSKIP interaction; facilitates PKA-induced phosphorylation and regulates GSK3B activity. Phosphorylated by the activated catalytic chain. Four types of regulatory chains are found: I-alpha, I-beta, II-alpha, and II-beta. Their expression varies among tissues and is in some cases constitutive and in others inducible.

It localises to the cytoplasm. The protein resides in the cell membrane. Regulatory subunit of the cAMP-dependent protein kinases involved in cAMP signaling in cells. Type II regulatory chains mediate membrane association by binding to anchoring proteins, including the MAP2 kinase. This is cAMP-dependent protein kinase type II-beta regulatory subunit (PRKAR2B) from Homo sapiens (Human).